The sequence spans 496 residues: Glycerol kinase (496 aa).

Position 12 (Thr12) interacts with ADP. ATP is bound by residues Thr12, Thr13, and Ser14. Sn-glycerol 3-phosphate is bound at residue Thr12. Arg16 lines the ADP pocket. Sn-glycerol 3-phosphate-binding residues include Arg82, Glu83, and Tyr134. Glycerol contacts are provided by Arg82, Glu83, and Tyr134. His230 bears the Phosphohistidine; by HPr mark. Asp244 provides a ligand contact to sn-glycerol 3-phosphate. Residues Asp244 and Gln245 each contribute to the glycerol site. ADP is bound by residues Thr266 and Gly309. Positions 266, 309, 313, and 410 each coordinate ATP. 2 residues coordinate ADP: Gly410 and Asn414.

It belongs to the FGGY kinase family. Homotetramer and homodimer (in equilibrium). The phosphoenolpyruvate-dependent sugar phosphotransferase system (PTS), including enzyme I, and histidine-containing protein (HPr) are required for the phosphorylation, which leads to the activation of the enzyme.

It catalyses the reaction glycerol + ATP = sn-glycerol 3-phosphate + ADP + H(+). Its pathway is polyol metabolism; glycerol degradation via glycerol kinase pathway; sn-glycerol 3-phosphate from glycerol: step 1/1. Its activity is regulated as follows. Activated by phosphorylation and inhibited by fructose 1,6-bisphosphate (FBP). In terms of biological role, key enzyme in the regulation of glycerol uptake and metabolism. Catalyzes the phosphorylation of glycerol to yield sn-glycerol 3-phosphate. This chain is Glycerol kinase, found in Bacillus cereus (strain ATCC 14579 / DSM 31 / CCUG 7414 / JCM 2152 / NBRC 15305 / NCIMB 9373 / NCTC 2599 / NRRL B-3711).